Consider the following 278-residue polypeptide: Ras-related protein Rab-40A-like (278 aa).

GTP is bound by residues glycine 26, lysine 27, and serine 28. Residue serine 28 coordinates Mg(2+). The tract at residues serine 41–isoleucine 49 is switch-I. Aspartate 69 lines the Mg(2+) pocket. Glycine 72, asparagine 126, and arginine 127 together coordinate GTP. Residues glycine 72–glutamine 88 form a switch-II region. In terms of domain architecture, SOCS box spans leucine 175 to alanine 228. Residue cysteine 270 is the site of S-palmitoyl cysteine attachment. A lipid anchor (S-geranylgeranyl cysteine) is attached at cysteine 275.

This sequence belongs to the small GTPase superfamily. Rab family. Requires Mg(2+) as cofactor. In terms of tissue distribution, expressed in brain, lung, heart, skeletal muscle, kidney and liver. Highest expression in brain. Expressed in fetal brain and kidney.

It is found in the membrane. Its subcellular location is the cytoplasm. The protein resides in the mitochondrion. It carries out the reaction GTP + H2O = GDP + phosphate + H(+). The protein operates within protein modification; protein ubiquitination. Its activity is regulated as follows. Regulated by guanine nucleotide exchange factors (GEFs) which promote the exchange of bound GDP for free GTP. Regulated by GTPase activating proteins (GAPs) which increase the GTP hydrolysis activity. Inhibited by GDP dissociation inhibitors (GDIs). Functionally, may act as substrate-recognition component of the ECS(RAB40) E3 ubiquitin ligase complex which mediates the ubiquitination and subsequent proteasomal degradation of target proteins. The Rab40 subfamily belongs to the Rab family that are key regulators of intracellular membrane trafficking, from the formation of transport vesicles to their fusion with membranes. Rabs cycle between an inactive GDP-bound form and an active GTP-bound form that is able to recruit to membranes different sets of downstream effectors directly responsible for vesicle formation, movement, tethering and fusion. In Homo sapiens (Human), this protein is Ras-related protein Rab-40A-like.